Here is a 118-residue protein sequence, read N- to C-terminus: DNA polymerase epsilon subunit 4 (118 aa).

2 stretches are compositionally biased toward low complexity: residues 1–11 (MAAAAAAGSGT) and 19–35 (GGEA…SAPG). Residues 1 to 37 (MAAAAAAGSGTPREEEAPGGEAAASQAQAPTSAPGGV) are disordered. An N-acetylalanine modification is found at A2. T11 bears the Phosphothreonine mark. S25 is modified (phosphoserine).

In terms of assembly, component of the DNA polymerase epsilon complex consisting of four subunits: the catalytic subunit POLE and the accessory subunits POLE2, POLE3 and POLE4. Interaction with POLE3 is a prerequisite for further binding with POLE and POLE2.

Its subcellular location is the nucleus. Functionally, accessory component of the DNA polymerase epsilon complex. Participates in DNA repair and in chromosomal DNA replication. This is DNA polymerase epsilon subunit 4 (Pole4) from Mus musculus (Mouse).